Reading from the N-terminus, the 408-residue chain is 1-deoxy-D-xylulose 5-phosphate reductoisomerase (408 aa).

Thr27, Gly28, Ser29, Ile30, Ala53, Arg54, Asn55, and Asn140 together coordinate NADPH. A 1-deoxy-D-xylulose 5-phosphate-binding site is contributed by Lys141. Residue Glu142 coordinates NADPH. Mn(2+) is bound at residue Asp166. Residues Ser167, Glu168, Ser192, and His215 each coordinate 1-deoxy-D-xylulose 5-phosphate. Position 168 (Glu168) interacts with Mn(2+). Gly221 contacts NADPH. Ser228, Asn233, Lys234, and Glu237 together coordinate 1-deoxy-D-xylulose 5-phosphate. Glu237 serves as a coordination point for Mn(2+).

This sequence belongs to the DXR family. It depends on Mg(2+) as a cofactor. Mn(2+) serves as cofactor.

It carries out the reaction 2-C-methyl-D-erythritol 4-phosphate + NADP(+) = 1-deoxy-D-xylulose 5-phosphate + NADPH + H(+). It participates in isoprenoid biosynthesis; isopentenyl diphosphate biosynthesis via DXP pathway; isopentenyl diphosphate from 1-deoxy-D-xylulose 5-phosphate: step 1/6. Its function is as follows. Catalyzes the NADPH-dependent rearrangement and reduction of 1-deoxy-D-xylulose-5-phosphate (DXP) to 2-C-methyl-D-erythritol 4-phosphate (MEP). This chain is 1-deoxy-D-xylulose 5-phosphate reductoisomerase, found in Nitratidesulfovibrio vulgaris (strain DP4) (Desulfovibrio vulgaris).